Consider the following 361-residue polypeptide: Histidinol-phosphate aminotransferase (361 aa).

K224 is modified (N6-(pyridoxal phosphate)lysine).

This sequence belongs to the class-II pyridoxal-phosphate-dependent aminotransferase family. Histidinol-phosphate aminotransferase subfamily. As to quaternary structure, homodimer. It depends on pyridoxal 5'-phosphate as a cofactor.

It carries out the reaction L-histidinol phosphate + 2-oxoglutarate = 3-(imidazol-4-yl)-2-oxopropyl phosphate + L-glutamate. Its pathway is amino-acid biosynthesis; L-histidine biosynthesis; L-histidine from 5-phospho-alpha-D-ribose 1-diphosphate: step 7/9. This chain is Histidinol-phosphate aminotransferase, found in Bacillus licheniformis (strain ATCC 14580 / DSM 13 / JCM 2505 / CCUG 7422 / NBRC 12200 / NCIMB 9375 / NCTC 10341 / NRRL NRS-1264 / Gibson 46).